Consider the following 443-residue polypeptide: Histidine--tRNA ligase (443 aa).

A compositionally biased stretch (basic and acidic residues) spans 1–20 (MTESEKKQQKPQKAKAEKFK). Positions 1–21 (MTESEKKQQKPQKAKAEKFKA) are disordered.

Belongs to the class-II aminoacyl-tRNA synthetase family. In terms of assembly, homodimer.

It is found in the cytoplasm. It catalyses the reaction tRNA(His) + L-histidine + ATP = L-histidyl-tRNA(His) + AMP + diphosphate + H(+). The protein is Histidine--tRNA ligase of Corynebacterium jeikeium (strain K411).